The chain runs to 144 residues: Large ribosomal subunit protein uL15 (144 aa).

Residues 1–52 (MRLNTLSPAAGSKPSKKRVGRGIGSGLGKTGGRGHKGQKSRSGGKVRAGFEG) are disordered. Positions 21–31 (RGIGSGLGKTG) are enriched in gly residues. A compositionally biased stretch (basic residues) spans 32-44 (GRGHKGQKSRSGG).

Belongs to the universal ribosomal protein uL15 family. In terms of assembly, part of the 50S ribosomal subunit.

Binds to the 23S rRNA. In Aliivibrio fischeri (strain ATCC 700601 / ES114) (Vibrio fischeri), this protein is Large ribosomal subunit protein uL15.